A 228-amino-acid polypeptide reads, in one-letter code: Vesicle transport protein SEC20 (228 aa).

Residues 1-199 are Cytoplasmic-facing; sequence MAAPQDVHVR…LITKYNRREL (199 aa). Residues 37–90 adopt a coiled-coil conformation; that stretch reads LSALTELNTKVKEKFQQLRHRIQDLEQLAKEQDKESEKQLLLQEVENHKKQMLS. Residues 200–220 form a helical; Anchor for type IV membrane protein membrane-spanning segment; it reads TDKLLIFLALALFLATVLYIV. Over 221 to 228 the chain is Lumenal; the sequence is KKRLFPFL.

Belongs to the SEC20 family. Component of a SNARE complex consisting of STX18, USE1L, BNIP1/SEC20L and SEC22B. Interacts directly with STX18, RINT1/TIP20L and NAPA. Interacts with ZW10 through RINT1. Interacts with BCL2. Interacts with RNF186. Interacts with RNF185. Interacts with SQSTM1; increased by 'Lys-63'-linked polyubiquitination of BNIP1. In terms of assembly, (Microbial infection) Interacts with adenovirus E1B 19K protein; plays a role in the suppression of cell apoptosis by the viral protein. Post-translationally, polyubiquitinated. 'Lys-63'-linked polyubiquitination by RNF185 increases the interaction with the autophagy receptor SQSTM1. Undergoes 'Lys-29'- and 'Lys-63'-linked polyubiquitination by RNF186 that may regulate BNIP1 localization to the mitochondrion. Isoform 1 is highly expressed in heart, brain, liver skeletal muscle and pancreas. Isoform 3 is moderately expressed in placenta, lung and kidney. Isoform 4 is highly expressed in testis and small intestine.

It localises to the endoplasmic reticulum membrane. Its subcellular location is the mitochondrion membrane. Its function is as follows. As part of a SNARE complex may be involved in endoplasmic reticulum membranes fusion and be required for the maintenance of endoplasmic reticulum organization. Also plays a role in apoptosis. It is for instance required for endoplasmic reticulum stress-induced apoptosis. As a substrate of RNF185 interacting with SQSTM1, might also be involved in mitochondrial autophagy. This chain is Vesicle transport protein SEC20 (BNIP1), found in Homo sapiens (Human).